The following is a 136-amino-acid chain: Large ribosomal subunit protein uL16 (136 aa).

Belongs to the universal ribosomal protein uL16 family. Part of the 50S ribosomal subunit.

Its function is as follows. Binds 23S rRNA and is also seen to make contacts with the A and possibly P site tRNAs. The protein is Large ribosomal subunit protein uL16 of Actinobacillus succinogenes (strain ATCC 55618 / DSM 22257 / CCUG 43843 / 130Z).